The following is a 475-amino-acid chain: CAAX prenyl protease 1 homolog (475 aa).

Topologically, residues 1–18 are lumenal; that stretch reads MGMWASLDALWEMPAEKR. A helical membrane pass occupies residues 19 to 39; that stretch reads IFGAVLLFSWTVYLWETFLAQ. Over 40-81 the chain is Nuclear; the sequence is RQRRIYKTTTHVPPELGQIMDSETFEKSRLYQLDKSTFSFWS. The helical transmembrane segment at 82-102 threads the bilayer; sequence GLYSETEGTLILLFGGIPYLW. The Lumenal segment spans residues 103-123; the sequence is RLSGRFCGYAGFGPEYEITQS. Residues 124 to 144 form a helical membrane-spanning segment; that stretch reads LVFLLLATLFSALTGLPWSLY. Residues 145 to 170 are Nuclear-facing; it reads NTFVIEEKHGFNQQTLGFFMKDAIKK. A helical membrane pass occupies residues 171–191; it reads FVVTQCILLPVSSLLLYIIKI. Residues 192-195 are Lumenal-facing; sequence GGDY. The helical transmembrane segment at 196–216 threads the bilayer; sequence FFIYAWLFTLVVSLVLVTIYA. Over 217 to 347 the chain is Nuclear; the sequence is DYIAPLFDKF…GHWKLGHTVK (131 aa). Residue H335 participates in Zn(2+) binding. E336 is a catalytic residue. Position 339 (H339) interacts with Zn(2+). A helical membrane pass occupies residues 348-368; that stretch reads NIIISQMNSFLCFFLFAVLIG. The Lumenal portion of the chain corresponds to 369–382; it reads RKELFAAFGFYDSQ. The chain crosses the membrane as a helical span at residues 383-405; the sequence is PTLIGLLIIFQFIFSPYNEVLSF. The Nuclear segment spans residues 406–475; the sequence is CLTVLSRRFE…LQALKTMKQH (70 aa). E415 is a Zn(2+) binding site.

This sequence belongs to the peptidase M48A family. It depends on Zn(2+) as a cofactor. Widely expressed. High levels in kidney, prostate, testis and ovary.

It localises to the endoplasmic reticulum membrane. The protein localises to the nucleus inner membrane. It is found in the early endosome membrane. Its subcellular location is the late endosome membrane. The catalysed reaction is Hydrolyzes the peptide bond -P2-(S-farnesyl or geranylgeranyl)C-P1'-P2'-P3'-COOH where P1' and P2' are amino acids with aliphatic side chains and P3' is any C-terminal residue.. Its function is as follows. Transmembrane metalloprotease whose catalytic activity is critical for processing lamin A/LMNA on the inner nuclear membrane and clearing clogged translocons on the endoplasmic reticulum. Proteolytically removes the C-terminal three residues of farnesylated proteins. Also plays an antiviral role independently of its protease activity by restricting enveloped RNA and DNA viruses, including influenza A, Zika, Ebola, Sindbis, vesicular stomatitis, cowpox, and vaccinia. Mechanistically, controls IFITM antiviral pathway to hinder viruses from breaching the endosomal barrier by modulating membrane fluidity. This Homo sapiens (Human) protein is CAAX prenyl protease 1 homolog.